The chain runs to 457 residues: L-asparaginase-like protein GA18140 (457 aa).

An N-terminal signal peptide occupies residues 1–20 (MRYLCRAQLLSLLLLPLLKA). 3 cysteine pairs are disulfide-bonded: C72/C78, C172/C188, and C327/C354.

This sequence belongs to the Ntn-hydrolase family.

In Drosophila pseudoobscura pseudoobscura (Fruit fly), this protein is L-asparaginase-like protein GA18140.